The primary structure comprises 471 residues: Phosphatidylserine synthase 2 (471 aa).

A disordered region spans residues 1-26 (MRRGERRVAGGSGSESPLLEGRRSTE). The Cytoplasmic portion of the chain corresponds to 1–40 (MRRGERRVAGGSGSESPLLEGRRSTESEVYDDGTNTFFWR). S12, S14, and S16 each carry phosphoserine. The chain crosses the membrane as a helical span at residues 41–61 (AHTLTVLFILTCALGYVTLLE). At 62 to 74 (ETPQDTAYNTKRG) the chain is on the lumenal side. The helical transmembrane segment at 75-95 (IVASILVFLCFGVTQAKDGPF) threads the bilayer. The Cytoplasmic segment spans residues 96–104 (SRPHPAYWR). The helical transmembrane segment at 105–125 (FWLCVSVVYELFLIFILFQTV) threads the bilayer. Over 126–291 (HDGRQFLKYV…EWKPASSLHR (166 aa)) the chain is Lumenal. A glycan (N-linked (GlcNAc...) asparagine) is linked at N159. The chain crosses the membrane as a helical span at residues 292–312 (WLAVCGIILVFLLAELNTFYL). K313 is a topological domain (cytoplasmic). The helical transmembrane segment at 314-334 (FVLWMPPEHYLVLLRLVFFVN) threads the bilayer. Over 335–354 (VGGVAMREIYDFMDELKPHR) the chain is Lumenal. A helical transmembrane segment spans residues 355–375 (KLGQQAWLVAAITVTELLIVV). Over 376-381 (KYDPHT) the chain is Cytoplasmic. The chain crosses the membrane as a helical span at residues 382-402 (LTLSLPFYISQCWTLGSILVL). The Lumenal portion of the chain corresponds to 403–471 (TWTVWRFFLR…PAEEGPSAAS (69 aa)). Residues 423-471 (RQKQQSHQAINNGDGHPGPEDDLPGTGTAEEEGTTNDGVPAEEGPSAAS) are disordered.

This sequence belongs to the phosphatidyl serine synthase family.

The protein localises to the endoplasmic reticulum membrane. It carries out the reaction a 1,2-diacyl-sn-glycero-3-phosphoethanolamine + L-serine = a 1,2-diacyl-sn-glycero-3-phospho-L-serine + ethanolamine. The catalysed reaction is 1-hexadecanoyl-2-(9Z-octadecenoyl)-sn-glycero-3-phosphoethanolamine + L-serine = 1-hexadecanoyl-2-(9Z-octadecenoyl)-sn-glycero-3-phospho-L-serine + ethanolamine. It catalyses the reaction 1-hexadecanoyl-2-(4Z,7Z,10Z,13Z,16Z,19Z-docosahexaenoyl)-sn-glycero-3-phosphoethanolamine + L-serine = 1-hexadecanoyl-2-(4Z,7Z,10Z,13Z,16Z,19Z-docosahexaenoyl)-sn-glycero-3-phosphoserine + ethanolamine. The enzyme catalyses 1-octadecanoyl-2-(5Z,8Z,11Z,14Z)-eicosatetraenoyl-sn-glycero-3-phosphoethanolamine + L-serine = 1-octadecanoyl-2-(5Z,8Z,11Z,14Z)-eicosatetraenoyl-sn-glycero-3-phosphoserine + ethanolamine. It carries out the reaction 1-octadecanoyl-2-(4Z,7Z,10Z,13Z,16Z,19Z-docosahexaenoyl)-sn-glycero-3-phosphoethanolamine + L-serine = 1-octadecanoyl-2-(4Z,7Z,10Z,13Z,16Z,19Z-docosahexaenoyl)-sn-glycero-3-phosphoserine + ethanolamine. The catalysed reaction is 1-(1Z-octadecenyl)-2-(4Z,7Z,10Z,13Z,16Z,19Z-docosahexaenoyl)-sn-glycero-3-phosphoethanolamine + L-serine = 1-(1Z-octadecenyl)-2-(4Z,7Z,10Z,13Z,16Z,19Z-docosahexaenoyl)-sn-glycero-3-phospho-L-serine + ethanolamine. It catalyses the reaction 1-octadecanoyl-2-(9Z-octadecenoyl)-sn-glycero-3-phosphoethanolamine + L-serine = 1-octadecanoyl-2-(9Z-octadecenoyl)-sn-glycero-3-phospho-L-serine + ethanolamine. The enzyme catalyses 1-(1Z-octadecenyl)-2-(9Z-octadecenoyl)-sn-glycero-3-phosphoethanolamine + L-serine = 1-(1Z-octadecenyl)-2-(9Z-octadecenoyl)-sn-glycero-3-phospho-L-serine + ethanolamine. It carries out the reaction 1-(1Z-octadecenyl)-2-(5Z,8Z,11Z,14Z- eicosatetraenoyl)-sn-glycero-3-phosphoethanolamine + L-serine = 1-(1Z-octadecenyl)-2-(5Z,8Z,11Z,14Z-eicosatetraenoyl)-sn-glycero-3-phospho-L-serine + ethanolamine. It participates in phospholipid metabolism; phosphatidylserine biosynthesis. In terms of biological role, catalyzes a base-exchange reaction in which the polar head group of phosphatidylethanolamine (PE) or phosphatidylcholine (PC) is replaced by L-serine. Catalyzes the conversion of phosphatatidylethanolamine and does not act on phosphatidylcholine. Can utilize both phosphatidylethanolamine (PE) plasmalogen and diacyl PE as substrate and the latter is six times better utilized, indicating the importance of an ester linkage at the sn-1 position. Although it shows no sn-1 fatty acyl preference, exhibits significant preference towards docosahexaenoic acid (22:6n-3) compared with 18:1 or 20:4 at the sn-2 position. This is Phosphatidylserine synthase 2 (Ptdss2) from Rattus norvegicus (Rat).